The primary structure comprises 798 residues: Cation channel sperm-associated auxiliary subunit delta (798 aa).

A signal peptide spans 1 to 20 (MLMLMLVAAVTMWLRPLVTA). Over 21–723 (QLCRSRTVRT…AFPVQLVSAG (703 aa)) the chain is Extracellular. Disulfide bonds link C23–C369, C59–C145, C144–C152, C387–C496, C510–C701, C525–C572, and C624–C652. N-linked (GlcNAc...) asparagine glycosylation is present at N123. Residues N230, N240, N472, N538, and N630 are each glycosylated (N-linked (GlcNAc...) asparagine). Residues 724–745 (VVILLIISSILGSVWLAYKTPK) traverse the membrane as a helical segment. Residues 746–798 (LLRTARGRRIKKCATQLCRRCKTVCQFRASATARAGTEPPGRHRTPHGGRSDH) are Cytoplasmic-facing.

Belongs to the CATSPERD family. Component of the CatSper complex or CatSpermasome composed of the core pore-forming members CATSPER1, CATSPER2, CATSPER3 and CATSPER4 as well as auxiliary members CATSPERB, CATSPERG, CATSPERD, CATSPERE, CATSPERZ, C2CD6/CATSPERT, TMEM249, TMEM262 and EFCAB9. HSPA1 may be an additional auxiliary complex member. The core complex members CATSPER1, CATSPER2, CATSPER3 and CATSPER4 form a heterotetrameric channel. The auxiliary CATSPERB, CATSPERG, CATSPERD and CATSPERE subunits form a pavilion-like structure over the pore which stabilizes the complex through interactions with CATSPER4, CATSPER3, CATSPER1 and CATSPER2 respectively. TMEM262/CATSPERH interacts with CATSPERB, further stabilizing the complex. C2CD6/CATSPERT interacts at least with CATSPERD and is required for targeting the CatSper complex in the flagellar membrane.

It localises to the cell projection. Its subcellular location is the cilium. The protein localises to the flagellum membrane. In terms of biological role, auxiliary component of the CatSper complex, a complex involved in sperm cell hyperactivation. Sperm cell hyperactivation is needed for sperm motility which is essential late in the preparation of sperm for fertilization. Required for CATSPER1 stability before intraflagellar transport and/or incorporation of the CatSper complex channel into the flagellar membrane. In Homo sapiens (Human), this protein is Cation channel sperm-associated auxiliary subunit delta.